Consider the following 279-residue polypeptide: Probable diacylglycerol pyrophosphate phosphatase 1 (279 aa).

Over 1–17 (MEAVGKHVKLFWNVYSD) the chain is Lumenal. Residues 18 to 38 (YAVLIAISLSYFVFDVLMLPF) traverse the membrane as a helical segment. Residues 39 to 58 (TRQFSLEDITISHPFALHEQ) lie on the Cytoplasmic side of the membrane. Residues 59–79 (VPTKYLGIICVFFPALVLYGF) form a helical membrane-spanning segment. Residues 80-86 (GKLRNNS) lie on the Lumenal side of the membrane. A helical transmembrane segment spans residues 87–107 (LLFWKSLMGLLYSTMVCGLCV). Topologically, residues 108-163 (SLLKNAVGRPRPDFLARCQPFESTPKTGLVDVLSCSVPWSDKVLQDGFRSFPSGHT) are cytoplasmic. The tract at residues 111 to 119 (KNAVGRPRP) is phosphatase sequence motif I. Positions 159-162 (PSGH) are phosphatase sequence motif II. A helical transmembrane segment spans residues 164–184 (SFSFAGLGFLAIFLAGQLKMF). Residues 185-187 (RNK) are Lumenal-facing. A helical membrane pass occupies residues 188–208 (TSSWKVVVPLVPLSIASWIGL). Residues 209–220 (SRSQDYRHHKED) are Cytoplasmic-facing. The phosphatase sequence motif III stretch occupies residues 209 to 220 (SRSQDYRHHKED). A helical membrane pass occupies residues 221-241 (IAVGALFGFAIAYVVYRQLFP). Residues 242 to 279 (PLDHHNADILYVQAELDEGYTNVHSAGNSSATNAEQMV) lie on the Lumenal side of the membrane.

This sequence belongs to the PA-phosphatase related phosphoesterase family.

The protein resides in the vacuole membrane. It is found in the endoplasmic reticulum membrane. It carries out the reaction a 1,2-diacyl-sn-glycerol 3-diphosphate + H2O = a 1,2-diacyl-sn-glycero-3-phosphate + phosphate + H(+). It catalyses the reaction a 1,2-diacyl-sn-glycero-3-phosphate + H2O = a 1,2-diacyl-sn-glycerol + phosphate. Its function is as follows. Catalyzes the dephosphorylation of diacylglycerol phosphate (DGPP) to phosphatidate (PA) and the subsequent dephosphorylation of PA to diacylglycerol (DAG). The chain is Probable diacylglycerol pyrophosphate phosphatase 1 (dpp1) from Schizosaccharomyces pombe (strain 972 / ATCC 24843) (Fission yeast).